Consider the following 414-residue polypeptide: Tryptophan synthase beta chain (414 aa).

The segment covering 1-26 (MVSTFSRKDQNYKNDDLNQPSKEGRF) has biased composition (basic and acidic residues). The disordered stretch occupies residues 1-27 (MVSTFSRKDQNYKNDDLNQPSKEGRFG). Lysine 109 carries the post-translational modification N6-(pyridoxal phosphate)lysine.

Belongs to the TrpB family. In terms of assembly, tetramer of two alpha and two beta chains. Pyridoxal 5'-phosphate is required as a cofactor.

It catalyses the reaction (1S,2R)-1-C-(indol-3-yl)glycerol 3-phosphate + L-serine = D-glyceraldehyde 3-phosphate + L-tryptophan + H2O. Its pathway is amino-acid biosynthesis; L-tryptophan biosynthesis; L-tryptophan from chorismate: step 5/5. The beta subunit is responsible for the synthesis of L-tryptophan from indole and L-serine. The polypeptide is Tryptophan synthase beta chain (Prochlorococcus marinus (strain MIT 9301)).